A 135-amino-acid chain; its full sequence is uncharacterized protein (135 aa).

The interval 1 to 80 is disordered; that stretch reads MRSSSLPGAR…QRGSCASANA (80 aa). Positions 54 to 65 are enriched in gly residues; that stretch reads GARGGGRRGWGG.

This is an uncharacterized protein from Homo sapiens (Human).